The following is a 117-amino-acid chain: Iron-sulfur cluster insertion protein ErpA (117 aa).

Positions 45, 109, and 111 each coordinate iron-sulfur cluster.

This sequence belongs to the HesB/IscA family. As to quaternary structure, homodimer. Requires iron-sulfur cluster as cofactor.

In terms of biological role, required for insertion of 4Fe-4S clusters for at least IspG. The sequence is that of Iron-sulfur cluster insertion protein ErpA from Hahella chejuensis (strain KCTC 2396).